The primary structure comprises 471 residues: Putative multidrug resistance protein MdtD (471 aa).

13 helical membrane-spanning segments follow: residues 12-32 (LWIVAFGFFMQSLDTTIVNTA), 49-69 (MVIVSYVLTVAVMLPASGWMA), 72-92 (IGVRNIFFTAIVLFTLGSLFC), 101-123 (LVMSRVLQGVGGAMMVPVGRLTV), 138-158 (FVTLPGQVGPLLGPALGGILV), 165-185 (WIFLINLPVGIVGAIATLWLM), 195-215 (FDIFGFVLLAAGMATLTLALD), 220-240 (LGISTLTLCLLIVIGIVSILW), 265-285 (IGLFGSFVGRLGSGMLPFMTP), 286-306 (VFLQIGLGFSPFHAGLMMIPM), 342-362 (LVFMAVALMGWYYVLPLVLFF), 393-413 (LLSMIMQLSMSVGVTVAGLLL), and 431-451 (VFLYTYLSMAVIIALPALIFA).

Belongs to the major facilitator superfamily. TCR/Tet family.

Its subcellular location is the cell inner membrane. The protein is Putative multidrug resistance protein MdtD of Enterobacter sp. (strain 638).